A 147-amino-acid chain; its full sequence is Large ribosomal subunit protein uL16 (147 aa).

It belongs to the universal ribosomal protein uL16 family. As to quaternary structure, part of the 50S ribosomal subunit.

Binds 23S rRNA and is also seen to make contacts with the A and possibly P site tRNAs. In Caldicellulosiruptor bescii (strain ATCC BAA-1888 / DSM 6725 / KCTC 15123 / Z-1320) (Anaerocellum thermophilum), this protein is Large ribosomal subunit protein uL16.